Here is a 342-residue protein sequence, read N- to C-terminus: Dihydroorotate dehydrogenase (quinone) (342 aa).

Residues 65 to 69 (AGLDK) and Thr-89 each bind FMN. Lys-69 contributes to the substrate binding site. Position 114-118 (114-118 (NRMGF)) interacts with substrate. The FMN site is built by Asn-142 and Asn-175. Asn-175 is a binding site for substrate. Ser-178 (nucleophile) is an active-site residue. Asn-180 contacts substrate. The FMN site is built by Lys-220 and Thr-248. Residue 249–250 (NT) coordinates substrate. FMN-binding positions include Gly-271, Gly-300, and 321-322 (YT).

The protein belongs to the dihydroorotate dehydrogenase family. Type 2 subfamily. As to quaternary structure, monomer. The cofactor is FMN.

The protein resides in the cell membrane. The enzyme catalyses (S)-dihydroorotate + a quinone = orotate + a quinol. It functions in the pathway pyrimidine metabolism; UMP biosynthesis via de novo pathway; orotate from (S)-dihydroorotate (quinone route): step 1/1. Its function is as follows. Catalyzes the conversion of dihydroorotate to orotate with quinone as electron acceptor. The sequence is that of Dihydroorotate dehydrogenase (quinone) from Burkholderia pseudomallei (strain K96243).